Consider the following 273-residue polypeptide: MPELPEVETLKNSLKDKLIGLIIKNIELKRDNLRYNLSPLLTTEILNTNILNVRRRAKYLIIDFGNYYSLVIHLGMSGRFTVQPANYKIQKHDHVIFDLNNCEKLIFNDTRRFGMVYSFKTNFLEEKFFYNLGIEPLSDLLTLEYLKSKLITRTIAIKNLIMDNKIIVGVGNLYASESLHLARIHPHKLGRNLKDDEIENLIKSIREVLTKAITAGGTTLKNFVNGDSKPGYFTQQLRVYGREGQKCFNCSSTILKTKNSGRSTFYCKTCQYT.

Residue P2 is the Schiff-base intermediate with DNA of the active site. Catalysis depends on E3, which acts as the Proton donor. K58 serves as the catalytic Proton donor; for beta-elimination activity. H92, R111, and R153 together coordinate DNA. The FPG-type zinc-finger motif lies at 238 to 272; it reads RVYGREGQKCFNCSSTILKTKNSGRSTFYCKTCQY. R262 (proton donor; for delta-elimination activity) is an active-site residue.

Belongs to the FPG family. In terms of assembly, monomer. It depends on Zn(2+) as a cofactor.

The enzyme catalyses Hydrolysis of DNA containing ring-opened 7-methylguanine residues, releasing 2,6-diamino-4-hydroxy-5-(N-methyl)formamidopyrimidine.. It carries out the reaction 2'-deoxyribonucleotide-(2'-deoxyribose 5'-phosphate)-2'-deoxyribonucleotide-DNA = a 3'-end 2'-deoxyribonucleotide-(2,3-dehydro-2,3-deoxyribose 5'-phosphate)-DNA + a 5'-end 5'-phospho-2'-deoxyribonucleoside-DNA + H(+). Functionally, involved in base excision repair of DNA damaged by oxidation or by mutagenic agents. Acts as a DNA glycosylase that recognizes and removes damaged bases. Has a preference for oxidized purines, such as 7,8-dihydro-8-oxoguanine (8-oxoG). Has AP (apurinic/apyrimidinic) lyase activity and introduces nicks in the DNA strand. Cleaves the DNA backbone by beta-delta elimination to generate a single-strand break at the site of the removed base with both 3'- and 5'-phosphates. This chain is Formamidopyrimidine-DNA glycosylase, found in Rickettsia canadensis (strain McKiel).